Here is a 100-residue protein sequence, read N- to C-terminus: Small ribosomal subunit protein uS14c (100 aa).

The protein belongs to the universal ribosomal protein uS14 family. In terms of assembly, part of the 30S ribosomal subunit.

Its subcellular location is the plastid. The protein localises to the chloroplast. In terms of biological role, binds 16S rRNA, required for the assembly of 30S particles. The chain is Small ribosomal subunit protein uS14c from Cyanidioschyzon merolae (strain NIES-3377 / 10D) (Unicellular red alga).